The sequence spans 664 residues: DCC-interacting protein 13-beta (664 aa).

Residues 1-428 are required for RAB5A binding; that stretch reads MPAVDKLLLE…NSEMENENDK (428 aa). One can recognise a BAR domain in the interval 3-268; that stretch reads AVDKLLLEEA…ESVYTPDSDV (266 aa). Residues 277–375 form the PH domain; that stretch reads LIQKAGYLNL…WICAINNISR (99 aa). The region spanning 488-637 is the PID domain; the sequence is SLLQQMFIVR…LMLSIPLTND (150 aa). Residues 643–664 form a disordered region; it reads LNDQPDDDDGNPNEHRGAESEA. Residues 654-664 show a composition bias toward basic and acidic residues; the sequence is PNEHRGAESEA.

As to quaternary structure, homodimer. Homotetramer. Binds RAB5A/Rab5 through an N-terminal domain. This interaction is essential for its recruitment to endosomal membranes as well as its role in cell proliferation. Binds subunits of the NuRD/MeCP1 complex. Interacts with FSHR; interaction is independent of follicle stimulating hormone stimulation. Interacts with APPL1; the interaction is decreased by adiponectin in a time-dependent manner. Forms a complex comprising APPL1, RUVBL2, CTNNB1, HDAC1 and HDAC2; interaction reduces interaction between CTNNB1, HDAC1, HDAC2 and RUVBL2 leading to the decrease of deacetylase activity of this complex; affects the recruitment of repressive complexes to the Wnt target genes. Interacts (via BAR domain) with TBC1D1; interaction is dependent of TBC1D1 phosphorylation at 'Ser-235'; interaction diminishes the phosphorylation of TBC1D1 at 'Thr-596', resulting in inhibition of SLC2A4 translocation and glucose uptake. Interacts with ANXA2; targets APPL2 to endosomes and acting in parallel to RAB5A. Interacts with RAB31 (in GTP-bound form); interaction contributes to or enhances recruitment of APPL2 to the phagosomes; interaction enhances Fc-gamma receptor-mediated phagocytosis through PI3K/Akt signaling in macrophages. Interacts with PIK3R1; forms a complex with PIK3R1 and APPL1. Interacts (via BAR domain) with ADIPOR1; hinders the accessibility of APPL1 to ADIPOR1; negatively regulates adiponectin signaling; ADIPOQ dissociates this interaction and facilitates the recruitment of APPL1 to ADIPOR1. Interacts (via BAR domain) with ADIPOR2; ADIPOQ dissociates this interaction. In terms of tissue distribution, high levels in brain, heart, kidney and skeletal muscle.

The protein resides in the early endosome membrane. The protein localises to the nucleus. Its subcellular location is the cell membrane. It localises to the endosome membrane. It is found in the cytoplasm. The protein resides in the cytoplasmic vesicle. The protein localises to the phagosome. Its subcellular location is the cell projection. It localises to the ruffle. It is found in the ruffle membrane. The protein resides in the phagosome membrane. In terms of biological role, multifunctional adapter protein that binds to various membrane receptors, nuclear factors and signaling proteins to regulate many processes, such as cell proliferation, immune response, endosomal trafficking and cell metabolism. Regulates signaling pathway leading to cell proliferation through interaction with RAB5A and subunits of the NuRD/MeCP1 complex. Plays a role in immune response by modulating phagocytosis, inflammatory and innate immune responses. In macrophages, enhances Fc-gamma receptor-mediated phagocytosis through interaction with RAB31 leading to activation of PI3K/Akt signaling. In response to LPS, modulates inflammatory responses by playing a key role on the regulation of TLR4 signaling and in the nuclear translocation of RELA/NF-kappa-B p65 and the secretion of pro- and anti-inflammatory cytokines. Also functions as a negative regulator of innate immune response via inhibition of AKT1 signaling pathway by forming a complex with APPL1 and PIK3R1. Plays a role in endosomal trafficking of TGFBR1 from the endosomes to the nucleus. Plays a role in cell metabolism by regulating adiponecting ans insulin signaling pathways and adaptative thermogenesis. In muscle, negatively regulates adiponectin-simulated glucose uptake and fatty acid oxidation by inhibiting adiponectin signaling pathway through APPL1 sequestration thereby antagonizing APPL1 action. In muscles, negatively regulates insulin-induced plasma membrane recruitment of GLUT4 and glucose uptake through interaction with TBC1D1. Plays a role in cold and diet-induced adaptive thermogenesis by activating ventromedial hypothalamus (VMH) neurons throught AMPK inhibition which enhances sympathetic outflow to subcutaneous white adipose tissue (sWAT), sWAT beiging and cold tolerance. Also plays a role in other signaling pathways namely Wnt/beta-catenin, HGF and glucocorticoid receptor signaling. Positive regulator of beta-catenin/TCF-dependent transcription through direct interaction with RUVBL2/reptin resulting in the relief of RUVBL2-mediated repression of beta-catenin/TCF target genes by modulating the interactions within the beta-catenin-reptin-HDAC complex. May affect adult neurogenesis in hippocampus and olfactory system via regulating the sensitivity of glucocorticoid receptor. Required for fibroblast migration through HGF cell signaling. This Homo sapiens (Human) protein is DCC-interacting protein 13-beta.